A 318-amino-acid polypeptide reads, in one-letter code: tRNA-cytidine(32) 2-sulfurtransferase (318 aa).

The interval 1-29 is disordered; sequence MNHVSSTKPDTAPSKHLTSSHIDATDQNN. Residues 16 to 27 show a composition bias toward polar residues; that stretch reads HLTSSHIDATDQ. Positions 64–69 match the PP-loop motif motif; that stretch reads SGGKDS. [4Fe-4S] cluster-binding residues include cysteine 139, cysteine 142, and cysteine 230.

Belongs to the TtcA family. As to quaternary structure, homodimer. Requires Mg(2+) as cofactor. The cofactor is [4Fe-4S] cluster.

The protein resides in the cytoplasm. It carries out the reaction cytidine(32) in tRNA + S-sulfanyl-L-cysteinyl-[cysteine desulfurase] + AH2 + ATP = 2-thiocytidine(32) in tRNA + L-cysteinyl-[cysteine desulfurase] + A + AMP + diphosphate + H(+). It participates in tRNA modification. Functionally, catalyzes the ATP-dependent 2-thiolation of cytidine in position 32 of tRNA, to form 2-thiocytidine (s(2)C32). The sulfur atoms are provided by the cysteine/cysteine desulfurase (IscS) system. The sequence is that of tRNA-cytidine(32) 2-sulfurtransferase from Pseudoalteromonas atlantica (strain T6c / ATCC BAA-1087).